A 56-amino-acid chain; its full sequence is Small ribosomal subunit protein uS14B (56 aa).

Positions 21 and 24 each coordinate Zn(2+). Position 25 is a phosphoserine (serine 25). Zn(2+)-binding residues include cysteine 39 and cysteine 42.

This sequence belongs to the universal ribosomal protein uS14 family. Component of the small ribosomal subunit (SSU). Mature yeast ribosomes consist of a small (40S) and a large (60S) subunit. The 40S small subunit contains 1 molecule of ribosomal RNA (18S rRNA) and 33 different proteins (encoded by 57 genes). The large 60S subunit contains 3 rRNA molecules (25S, 5.8S and 5S rRNA) and 46 different proteins (encoded by 81 genes). It depends on Zn(2+) as a cofactor.

Its subcellular location is the cytoplasm. Component of the ribosome, a large ribonucleoprotein complex responsible for the synthesis of proteins in the cell. The small ribosomal subunit (SSU) binds messenger RNAs (mRNAs) and translates the encoded message by selecting cognate aminoacyl-transfer RNA (tRNA) molecules. The large subunit (LSU) contains the ribosomal catalytic site termed the peptidyl transferase center (PTC), which catalyzes the formation of peptide bonds, thereby polymerizing the amino acids delivered by tRNAs into a polypeptide chain. The nascent polypeptides leave the ribosome through a tunnel in the LSU and interact with protein factors that function in enzymatic processing, targeting, and the membrane insertion of nascent chains at the exit of the ribosomal tunnel. The polypeptide is Small ribosomal subunit protein uS14B (Saccharomyces cerevisiae (strain ATCC 204508 / S288c) (Baker's yeast)).